The chain runs to 346 residues: Holliday junction branch migration complex subunit RuvB (346 aa).

The interval 2–183 is large ATPase domain (RuvB-L); the sequence is TDDRIIGAGA…FGIVQRLEFY (182 aa). ATP contacts are provided by residues isoleucine 22, arginine 23, glycine 64, lysine 67, threonine 68, threonine 69, 130–132, arginine 173, tyrosine 183, and arginine 220; that span reads EDF. Threonine 68 contributes to the Mg(2+) binding site. The tract at residues 184–254 is small ATPAse domain (RuvB-S); the sequence is SVEELTRIVR…VAQAAMKMLK (71 aa). The interval 257-346 is head domain (RuvB-H); the sequence is PEGFDELDRR…DLFAEVPDVG (90 aa). 3 residues coordinate DNA: arginine 293, arginine 312, and arginine 317.

Belongs to the RuvB family. Homohexamer. Forms an RuvA(8)-RuvB(12)-Holliday junction (HJ) complex. HJ DNA is sandwiched between 2 RuvA tetramers; dsDNA enters through RuvA and exits via RuvB. An RuvB hexamer assembles on each DNA strand where it exits the tetramer. Each RuvB hexamer is contacted by two RuvA subunits (via domain III) on 2 adjacent RuvB subunits; this complex drives branch migration. In the full resolvosome a probable DNA-RuvA(4)-RuvB(12)-RuvC(2) complex forms which resolves the HJ.

It is found in the cytoplasm. The enzyme catalyses ATP + H2O = ADP + phosphate + H(+). Functionally, the RuvA-RuvB-RuvC complex processes Holliday junction (HJ) DNA during genetic recombination and DNA repair, while the RuvA-RuvB complex plays an important role in the rescue of blocked DNA replication forks via replication fork reversal (RFR). RuvA specifically binds to HJ cruciform DNA, conferring on it an open structure. The RuvB hexamer acts as an ATP-dependent pump, pulling dsDNA into and through the RuvAB complex. RuvB forms 2 homohexamers on either side of HJ DNA bound by 1 or 2 RuvA tetramers; 4 subunits per hexamer contact DNA at a time. Coordinated motions by a converter formed by DNA-disengaged RuvB subunits stimulates ATP hydrolysis and nucleotide exchange. Immobilization of the converter enables RuvB to convert the ATP-contained energy into a lever motion, pulling 2 nucleotides of DNA out of the RuvA tetramer per ATP hydrolyzed, thus driving DNA branch migration. The RuvB motors rotate together with the DNA substrate, which together with the progressing nucleotide cycle form the mechanistic basis for DNA recombination by continuous HJ branch migration. Branch migration allows RuvC to scan DNA until it finds its consensus sequence, where it cleaves and resolves cruciform DNA. The chain is Holliday junction branch migration complex subunit RuvB from Stenotrophomonas maltophilia (strain R551-3).